The following is a 601-amino-acid chain: Elongation factor 4 (601 aa).

The tr-type G domain occupies 5 to 187 (IRKKNFCIIA…AICKYVPSPK (183 aa)). GTP is bound by residues 17-22 (DHGKST) and 134-137 (NKID).

Belongs to the TRAFAC class translation factor GTPase superfamily. Classic translation factor GTPase family. LepA subfamily.

The protein resides in the cell inner membrane. It carries out the reaction GTP + H2O = GDP + phosphate + H(+). Functionally, required for accurate and efficient protein synthesis under certain stress conditions. May act as a fidelity factor of the translation reaction, by catalyzing a one-codon backward translocation of tRNAs on improperly translocated ribosomes. Back-translocation proceeds from a post-translocation (POST) complex to a pre-translocation (PRE) complex, thus giving elongation factor G a second chance to translocate the tRNAs correctly. Binds to ribosomes in a GTP-dependent manner. The protein is Elongation factor 4 of Borreliella afzelii (strain PKo) (Borrelia afzelii).